Consider the following 318-residue polypeptide: UDP-N-acetylenolpyruvoylglucosamine reductase (318 aa).

The FAD-binding PCMH-type domain maps to 38–204; it reads IGGICPVVVE…LGIEILLKEG (167 aa). Residue arginine 182 is part of the active site. Residues 212–232 form a disordered region; sequence SLKDKRDRRNSSQPENKKSAG. Over residues 213 to 229 the composition is skewed to basic and acidic residues; sequence LKDKRDRRNSSQPENKK. Residue serine 233 is the Proton donor of the active site. Glutamate 310 is a catalytic residue.

This sequence belongs to the MurB family. FAD serves as cofactor.

It is found in the cytoplasm. It catalyses the reaction UDP-N-acetyl-alpha-D-muramate + NADP(+) = UDP-N-acetyl-3-O-(1-carboxyvinyl)-alpha-D-glucosamine + NADPH + H(+). Its pathway is cell wall biogenesis; peptidoglycan biosynthesis. Its function is as follows. Cell wall formation. The sequence is that of UDP-N-acetylenolpyruvoylglucosamine reductase from Leptospira borgpetersenii serovar Hardjo-bovis (strain JB197).